Here is a 417-residue protein sequence, read N- to C-terminus: MDALINLKDCKEYMTITFCNQEHQIKLAGTVDTPYFCGKDVCKVLGYKDIKDALKKHVDREDKLPLSEIKKVGGTAPPTFLGQTYAYLSHNDGRAVYISEGGLYSLIMSSEAPFAKDFRRLVCNVILPSIRKFGSYSIEQQLSSAMEQLALKDKSEQELQFQLKQEREEKENAYIKLRSETKRLKQQIKRTLEFNQATKQIEPLEYIYICTTEYYQQQHKFKVGGVQTFDLLKSRLTQYNSGESDSEAHFFIYIRKTVNYRSIEHAIKGLLSGFRENQSNELYIMHYDWLVKFVDAIMDGNAEFALLVNNNREQIAEDTINKEPTIVPPIQLEQIMYHRAGDNPRDLTSILDSETKRAIQDAIDSFEPYNNTVKRREFEEHLLKQSPNIKLEGKKRNAWDIARAMGSTKNPMWRYKY.

Positions 4-134 (LINLKDCKEY…VILPSIRKFG (131 aa)) constitute a Bro-N domain. Positions 152–193 (KDKSEQELQFQLKQEREEKENAYIKLRSETKRLKQQIKRTLE) form a coiled coil.

This sequence belongs to the IIV-6 201R/289L family.

In Invertebrate iridescent virus 6 (IIV-6), this protein is Putative Bro-N domain-containing protein 289L.